We begin with the raw amino-acid sequence, 475 residues long: Ribulose bisphosphate carboxylase large chain (475 aa).

A propeptide spanning residues 1–2 is cleaved from the precursor; that stretch reads MV. Residue proline 3 is modified to N-acetylproline. Lysine 14 is subject to N6,N6,N6-trimethyllysine. Asparagine 123 and threonine 173 together coordinate substrate. The active-site Proton acceptor is the lysine 175. Lysine 177 serves as a coordination point for substrate. Positions 201, 203, and 204 each coordinate Mg(2+). Lysine 201 carries the post-translational modification N6-carboxylysine. Histidine 294 serves as the catalytic Proton acceptor. The substrate site is built by arginine 295, histidine 327, and serine 379.

It belongs to the RuBisCO large chain family. Type I subfamily. Heterohexadecamer of 8 large chains and 8 small chains. It depends on Mg(2+) as a cofactor.

The protein resides in the plastid. The protein localises to the chloroplast. It carries out the reaction 2 (2R)-3-phosphoglycerate + 2 H(+) = D-ribulose 1,5-bisphosphate + CO2 + H2O. The enzyme catalyses D-ribulose 1,5-bisphosphate + O2 = 2-phosphoglycolate + (2R)-3-phosphoglycerate + 2 H(+). In terms of biological role, ruBisCO catalyzes two reactions: the carboxylation of D-ribulose 1,5-bisphosphate, the primary event in carbon dioxide fixation, as well as the oxidative fragmentation of the pentose substrate in the photorespiration process. Both reactions occur simultaneously and in competition at the same active site. The polypeptide is Ribulose bisphosphate carboxylase large chain (Stigeoclonium helveticum (Green alga)).